Reading from the N-terminus, the 461-residue chain is ATP synthase subunit beta (461 aa).

Residue 149 to 156 (GGAGVGKT) participates in ATP binding.

The protein belongs to the ATPase alpha/beta chains family. As to quaternary structure, F-type ATPases have 2 components, CF(1) - the catalytic core - and CF(0) - the membrane proton channel. CF(1) has five subunits: alpha(3), beta(3), gamma(1), delta(1), epsilon(1). CF(0) has three main subunits: a(1), b(2) and c(9-12). The alpha and beta chains form an alternating ring which encloses part of the gamma chain. CF(1) is attached to CF(0) by a central stalk formed by the gamma and epsilon chains, while a peripheral stalk is formed by the delta and b chains.

The protein localises to the cell membrane. The enzyme catalyses ATP + H2O + 4 H(+)(in) = ADP + phosphate + 5 H(+)(out). Produces ATP from ADP in the presence of a proton gradient across the membrane. The catalytic sites are hosted primarily by the beta subunits. The chain is ATP synthase subunit beta from Caldanaerobacter subterraneus subsp. tengcongensis (strain DSM 15242 / JCM 11007 / NBRC 100824 / MB4) (Thermoanaerobacter tengcongensis).